Consider the following 101-residue polypeptide: Small ribosomal subunit protein uS14 (101 aa).

This sequence belongs to the universal ribosomal protein uS14 family. As to quaternary structure, part of the 30S ribosomal subunit. Contacts proteins S3 and S10.

Its function is as follows. Binds 16S rRNA, required for the assembly of 30S particles and may also be responsible for determining the conformation of the 16S rRNA at the A site. The chain is Small ribosomal subunit protein uS14 from Caulobacter vibrioides (strain ATCC 19089 / CIP 103742 / CB 15) (Caulobacter crescentus).